The sequence spans 581 residues: Proline--tRNA ligase (581 aa).

Belongs to the class-II aminoacyl-tRNA synthetase family. ProS type 1 subfamily. Homodimer.

It is found in the cytoplasm. The catalysed reaction is tRNA(Pro) + L-proline + ATP = L-prolyl-tRNA(Pro) + AMP + diphosphate. Its function is as follows. Catalyzes the attachment of proline to tRNA(Pro) in a two-step reaction: proline is first activated by ATP to form Pro-AMP and then transferred to the acceptor end of tRNA(Pro). As ProRS can inadvertently accommodate and process non-cognate amino acids such as alanine and cysteine, to avoid such errors it has two additional distinct editing activities against alanine. One activity is designated as 'pretransfer' editing and involves the tRNA(Pro)-independent hydrolysis of activated Ala-AMP. The other activity is designated 'posttransfer' editing and involves deacylation of mischarged Ala-tRNA(Pro). The misacylated Cys-tRNA(Pro) is not edited by ProRS. The sequence is that of Proline--tRNA ligase from Blochmanniella floridana.